A 160-amino-acid chain; its full sequence is Lymphocyte antigen 96 (160 aa).

Residues 1-18 (MLPFLFFSTLFSSIFTEA) form the signal peptide. Intrachain disulfides connect cysteine 25-cysteine 51, cysteine 37-cysteine 148, and cysteine 95-cysteine 105. N-linked (GlcNAc...) asparagine glycosylation occurs at asparagine 26. The N-linked (GlcNAc...) asparagine glycan is linked to asparagine 114. Residues 119 to 123 (FSFKG) form an interaction with lipopolysaccharide region.

As to quaternary structure, heterogeneous homomer formed from homodimers; disulfide-linked. Belongs to the lipopolysaccharide (LPS) receptor, a multi-protein complex containing at least CD14, LY96 and TLR4. Binds to the extracellular domains of TLR2 and TLR4. Ligand binding induces interaction with TLR4 and oligomerization of the complex. In terms of processing, N-glycosylated; high-mannose.

The protein localises to the secreted. It is found in the extracellular space. Binds bacterial lipopolysaccharide (LPS). Cooperates with TLR4 in the innate immune response to bacterial lipopolysaccharide (LPS), and with TLR2 in the response to cell wall components from Gram-positive and Gram-negative bacteria. Enhances TLR4-dependent activation of NF-kappa-B. Cells expressing both LY96 and TLR4, but not TLR4 alone, respond to LPS. The chain is Lymphocyte antigen 96 (LY96) from Homo sapiens (Human).